A 250-amino-acid chain; its full sequence is NADH-quinone oxidoreductase subunit C (250 aa).

The tract at residues 193–250 (GMTPPLPGDEKADMPPIDDPMVTEGPEDTGAGARANAKAAEGTPADPPAMDDEEEDDA) is disordered. The span at 222-236 (GAGARANAKAAEGTP) shows a compositional bias: low complexity. A compositionally biased stretch (acidic residues) spans 241 to 250 (AMDDEEEDDA).

This sequence belongs to the complex I 30 kDa subunit family. As to quaternary structure, NDH-1 is composed of 14 different subunits. Subunits NuoB, C, D, E, F, and G constitute the peripheral sector of the complex.

The protein localises to the cell inner membrane. It catalyses the reaction a quinone + NADH + 5 H(+)(in) = a quinol + NAD(+) + 4 H(+)(out). Functionally, NDH-1 shuttles electrons from NADH, via FMN and iron-sulfur (Fe-S) centers, to quinones in the respiratory chain. The immediate electron acceptor for the enzyme in this species is believed to be ubiquinone. Couples the redox reaction to proton translocation (for every two electrons transferred, four hydrogen ions are translocated across the cytoplasmic membrane), and thus conserves the redox energy in a proton gradient. This is NADH-quinone oxidoreductase subunit C from Erythrobacter litoralis (strain HTCC2594).